Here is a 251-residue protein sequence, read N- to C-terminus: Glucosamine-6-phosphate deaminase (251 aa).

Asp73 functions as the Proton acceptor; for enolization step in the catalytic mechanism. Asn142 functions as the For ring-opening step in the catalytic mechanism. His144 (proton acceptor; for ring-opening step) is an active-site residue. Catalysis depends on Glu149, which acts as the For ring-opening step.

Belongs to the glucosamine/galactosamine-6-phosphate isomerase family. NagB subfamily.

The enzyme catalyses alpha-D-glucosamine 6-phosphate + H2O = beta-D-fructose 6-phosphate + NH4(+). It participates in amino-sugar metabolism; N-acetylneuraminate degradation; D-fructose 6-phosphate from N-acetylneuraminate: step 5/5. Functionally, catalyzes the reversible isomerization-deamination of glucosamine 6-phosphate (GlcN6P) to form fructose 6-phosphate (Fru6P) and ammonium ion. This Rhodopirellula baltica (strain DSM 10527 / NCIMB 13988 / SH1) protein is Glucosamine-6-phosphate deaminase.